A 524-amino-acid polypeptide reads, in one-letter code: Citrate exporter 1 (524 aa).

Residues 1 to 49 (MSSTTSSSRSDLEKVPVPQVTPRDSDSDKGSLSPEPSTLEAQSSEKPPH) are disordered. Polar residues predominate over residues 34 to 45 (PEPSTLEAQSSE). Residues 60–80 (MVCIVSLAAIFSPLSSNIYFP) form a helical membrane-spanning segment. Residue Asn-90 is glycosylated (N-linked (GlcNAc...) asparagine). A run of 5 helical transmembrane segments spans residues 95–115 (LATLTITVYMIVQGLAPSFWG), 125–145 (PVFIGTFIVYLVANIALAESK), 155–175 (ALQAAGSAATISIGAGVIGDI), 186–206 (GIFGGVRMLGQGIGPVFGGIF), and 215–235 (IFWFLTIAGGVSLLSILVLLP). Residue Asn-244 is glycosylated (N-linked (GlcNAc...) asparagine). 6 helical membrane-spanning segments follow: residues 296-316 (VFITLFFGSIVYTVWSMVTSS), 332-352 (IGLTFLGNGFGCMSGSYLVGY), 395-415 (TWWVIAIFIVTVALYGVSLRT), 417-437 (LAVPIILQYFIAFCSTGLFTI), 459-479 (LMRCLLGAGGVAIVQPILDAL), and 481-501 (PDYTFLLLAGITLVMTPLLYV).

The protein belongs to the major facilitator superfamily.

It localises to the cell membrane. The enzyme catalyses citrate(in) = citrate(out). Its function is as follows. Transmembrane transporter that exports citrate across the cell membrane. The chain is Citrate exporter 1 from Aspergillus niger (strain ATCC 1015 / CBS 113.46 / FGSC A1144 / LSHB Ac4 / NCTC 3858a / NRRL 328 / USDA 3528.7).